The chain runs to 68 residues: Amphipathic peptide CT1 (68 aa).

The signal sequence occupies residues Met1–Ala23. Residue Leu36 is modified to Leucine amide. Positions Gly40–Arg68 are excised as a propeptide.

It belongs to the non-disulfide-bridged peptide (NDBP) superfamily. Short antimicrobial peptide (group 4) family. As to expression, expressed by the venom gland.

The protein localises to the secreted. It localises to the target cell membrane. In terms of biological role, amphipathic peptide that shows no antibacterial activity even at 50 uM but shows a low hemolytic activity against human erythrocytes. The polypeptide is Amphipathic peptide CT1 (Mesomexovis subcristatus (Scorpion)).